Consider the following 266-residue polypeptide: MVSPDLIRNMVGIVGNIISFGLFLSPVPTFYRIIKNKDVQDFKADPYLATLLNCMLWVFYGLPIVHPNSILVVTINGIGLIIEAVYLTIFFLFSDKKNKKKMGVVLATEALFMAAVVLGVLLGAHTHQRRSLIVGILCAIFGTIMYSSPLTIMSQVVKTKSVEYMPLLLSVVSFLNGLCWTSYALIRLDIFITIPNGLGVLFALMQLILYAIYYRTTPKKQDKNLELPTVAPVAKDTSIVTPVSKDDDVVDGGNASHVTINITIEP.

At 1 to 9 (MVSPDLIRN) the chain is on the extracellular side. Residues 10–30 (MVGIVGNIISFGLFLSPVPTF) traverse the membrane as a helical segment. A MtN3/slv 1 domain is found at 10–97 (MVGIVGNIIS…TIFFLFSDKK (88 aa)). Topologically, residues 31 to 45 (YRIIKNKDVQDFKAD) are cytoplasmic. A helical membrane pass occupies residues 46-66 (PYLATLLNCMLWVFYGLPIVH). Over 67–69 (PNS) the chain is Extracellular. Residues 70-90 (ILVVTINGIGLIIEAVYLTIF) form a helical membrane-spanning segment. Topologically, residues 91–101 (FLFSDKKNKKK) are cytoplasmic. A helical transmembrane segment spans residues 102–122 (MGVVLATEALFMAAVVLGVLL). At 123–131 (GAHTHQRRS) the chain is on the extracellular side. The chain crosses the membrane as a helical span at residues 132–152 (LIVGILCAIFGTIMYSSPLTI). The region spanning 133-216 (IVGILCAIFG…LILYAIYYRT (84 aa)) is the MtN3/slv 2 domain. The Cytoplasmic segment spans residues 153 to 165 (MSQVVKTKSVEYM). Residues 166–186 (PLLLSVVSFLNGLCWTSYALI) traverse the membrane as a helical segment. The Extracellular portion of the chain corresponds to 187–189 (RLD). The chain crosses the membrane as a helical span at residues 190 to 210 (IFITIPNGLGVLFALMQLILY). The Cytoplasmic segment spans residues 211 to 266 (AIYYRTTPKKQDKNLELPTVAPVAKDTSIVTPVSKDDDVVDGGNASHVTINITIEP).

It belongs to the SWEET sugar transporter family. Forms homooligomers and/or heterooligomers.

Its subcellular location is the cell membrane. Its function is as follows. Mediates both low-affinity uptake and efflux of sugar across the plasma membrane. The protein is Bidirectional sugar transporter SWEET7b (SWEET7B) of Oryza sativa subsp. indica (Rice).